The sequence spans 86 residues: Small ribosomal subunit protein uS17 (86 aa).

This sequence belongs to the universal ribosomal protein uS17 family. As to quaternary structure, part of the 30S ribosomal subunit.

In terms of biological role, one of the primary rRNA binding proteins, it binds specifically to the 5'-end of 16S ribosomal RNA. This is Small ribosomal subunit protein uS17 from Streptococcus equi subsp. equi (strain 4047).